Consider the following 94-residue polypeptide: Nucleoid-associated protein MYPE8070 (94 aa).

It belongs to the YbaB/EbfC family. In terms of assembly, homodimer.

Its subcellular location is the cytoplasm. It is found in the nucleoid. Its function is as follows. Binds to DNA and alters its conformation. May be involved in regulation of gene expression, nucleoid organization and DNA protection. The polypeptide is Nucleoid-associated protein MYPE8070 (Malacoplasma penetrans (strain HF-2) (Mycoplasma penetrans)).